Consider the following 217-residue polypeptide: tRNA (guanine-N(7)-)-methyltransferase (217 aa).

Positions 44, 69, 96, and 118 each coordinate S-adenosyl-L-methionine. Aspartate 118 is an active-site residue. Residues lysine 122, aspartate 154, and threonine 191 to glutamate 194 contribute to the substrate site.

The protein belongs to the class I-like SAM-binding methyltransferase superfamily. TrmB family.

It carries out the reaction guanosine(46) in tRNA + S-adenosyl-L-methionine = N(7)-methylguanosine(46) in tRNA + S-adenosyl-L-homocysteine. It functions in the pathway tRNA modification; N(7)-methylguanine-tRNA biosynthesis. Catalyzes the formation of N(7)-methylguanine at position 46 (m7G46) in tRNA. This chain is tRNA (guanine-N(7)-)-methyltransferase, found in Bacillus cereus (strain B4264).